A 371-amino-acid polypeptide reads, in one-letter code: Opine oxidase subunit B (371 aa).

As to quaternary structure, heterodimer of a subunit A and a subunit B.

Its pathway is opine metabolism; octopine degradation. Functionally, oxidative cleavage of octopine into L-arginine and pyruvate. This chain is Opine oxidase subunit B (ooxB), found in Agrobacterium tumefaciens (strain Ach5).